An 80-amino-acid chain; its full sequence is MNKNPIYRSEEEAKNIACGNVAAELDENSQALDAINGAGWKQTIACTIAQGTLGCLVSYGLGNGGYCCTYTVECSKTCNK.

Residues 1–38 constitute a propeptide, cleaved by FlvT; it reads MNKNPIYRSEEEAKNIACGNVAAELDENSQALDAINGA. A 2,3-didehydrobutyrine; by FlvM1 mark is found at Thr43 and Thr47. The beta-methyllanthionine (Thr-Cys); by FlvM1 cross-link spans 52-55; sequence TLGC. The lanthionine (Ser-Cys); by FlvM1 cross-link spans 58–68; that stretch reads SYGLGNGGYCC. Cross-links (beta-methyllanthionine (Thr-Cys); by FlvM1) lie at residues 69-74 and 71-78; these read TYTVEC and TVECSKTC.

The lanthionine formed by Ser-58 and Cys-68 forms a putative lipid II binding motif. In terms of processing, maturation of FlvA1 peptides involves the enzymatic conversion of Thr, and Ser into dehydrated AA and the formation of thioether bonds with cysteines. Modifications are processed by the flavecin synthetase FlvM1. This is followed by membrane translocation and cleavage of the modified precursor. Post-translationally, contains DL-lanthionine and DL-beta-methyllanthionine, when coepressed in E.coli with the flavecin synthetase FlvM1.

It is found in the secreted. Its function is as follows. Lanthionine-containing peptide antibiotic (lantibiotic) only active on Gram-positive bacteria in synergy with Flvbeta peptides, which are encoded by the same operon than Flvalpha.a. Shows antibacterial activity in synergy with Flvbeta.b, Flvbeta.c, Flvbeta.e and Flvbeta.g. Does not show antibacterial activity when tested with Flvbeta.a, Flvbeta.d, Flvbeta.f and Flvbeta.h. The bactericidal activity of lantibiotics is based on depolarization of energized bacterial cytoplasmic membranes, initiated by the formation of aqueous transmembrane pores. This is Lantibiotic Flvalpha.c from Ruminococcus flavefaciens.